A 74-amino-acid polypeptide reads, in one-letter code: Hadrucalcin (74 aa).

Positions 1 to 27 (MKTSSLTIIFIAVIITIICLNIHDIEA) are cleaved as a signal peptide. Positions 28 to 39 (REIEFNAGRVVR) are excised as a propeptide. 3 disulfide bridges follow: C44/C58, C51/C62, and C57/C73. Residues 64-65 (RR) are essential for stimulation of [3H]ryanodine binding to RYR1.

Expressed by the venom gland.

It localises to the secreted. This toxin activates ryanodine receptors RyR1 and RyR2 by inducing a long-lasting subconductance state (35% of the full conductance stateon RyR1). Furthermore, it triggers calcium release from sarcoplasmic vesicles (11.8 nM are enough to induce a sharp release on RyR1, and 55% of the total calcium is released after toxin (100 nM) addition on RyR1) probably by acting as a cell-penetrating peptide (CPP). In addition, it has been shown to dose-dependently stimulate ryanodine binding to RyR1 (EC(50)=14.8 nM). It also augments the bell-shaped calcium-[3H]ryanodine binding curve that is maximal at about 10 uM calcium concentration. It binds a different site as ryanodine. It acts synergistically with caffeine. In vivo, intracerebroventricular injection into mice induces neurotoxic symptoms, followed by death. In Hoffmannihadrurus gertschi (Scorpion), this protein is Hadrucalcin.